Here is a 415-residue protein sequence, read N- to C-terminus: Phosphoglycerate kinase (415 aa).

Substrate is bound by residues 24–26 (DLN), R39, 62–65 (HLGR), R121, and R161. Residues K211, G307, E338, and 367–370 (GGDS) each bind ATP.

This sequence belongs to the phosphoglycerate kinase family. Monomer.

It is found in the cytoplasm. It catalyses the reaction (2R)-3-phosphoglycerate + ATP = (2R)-3-phospho-glyceroyl phosphate + ADP. Its pathway is carbohydrate degradation; glycolysis; pyruvate from D-glyceraldehyde 3-phosphate: step 2/5. This is Phosphoglycerate kinase from Micrococcus luteus (strain ATCC 4698 / DSM 20030 / JCM 1464 / CCM 169 / CCUG 5858 / IAM 1056 / NBRC 3333 / NCIMB 9278 / NCTC 2665 / VKM Ac-2230) (Micrococcus lysodeikticus).